Here is a 402-residue protein sequence, read N- to C-terminus: Argininosuccinate synthase (402 aa).

9–17 (AYSGGLDTS) lines the ATP pocket. Position 86 (tyrosine 86) interacts with L-citrulline. Glycine 116 serves as a coordination point for ATP. L-aspartate-binding residues include threonine 118, asparagine 122, and aspartate 123. Asparagine 122 contributes to the L-citrulline binding site. L-citrulline contacts are provided by arginine 126, serine 174, serine 183, glutamate 259, and tyrosine 271.

It belongs to the argininosuccinate synthase family. Type 1 subfamily. Homotetramer.

Its subcellular location is the cytoplasm. It catalyses the reaction L-citrulline + L-aspartate + ATP = 2-(N(omega)-L-arginino)succinate + AMP + diphosphate + H(+). The protein operates within amino-acid biosynthesis; L-arginine biosynthesis; L-arginine from L-ornithine and carbamoyl phosphate: step 2/3. In Geobacillus sp. (strain WCH70), this protein is Argininosuccinate synthase.